A 507-amino-acid polypeptide reads, in one-letter code: Monoogygenase CPUR_05431 (507 aa).

This sequence belongs to the PheA/TfdB FAD monooxygenase family. It depends on FAD as a cofactor.

It participates in pigment biosynthesis. Functionally, monoogygenase; part of the ergochrome gene cluster responsible for the typical purple-black color of the ergot sclerotia. The ergochrome gene cluster produces several ergot pigments including the yellow ergochrome secalonic acid and its derivatives, as well as the red anthraquinones endocrocin and clavorubin. The pathway begins with the synthesis of atrochrysone thioester by the polyketide synthase (PKS) CPUR_05437. The atrochrysone carboxyl ACP thioesterase CPUR_05436 then breaks the thioester bond and releases the atrochrysone carboxylic acid from CPUR_05437. The atrochrysone carboxylic acid is then converted to atrochrysone which is further transformed into emodin anthrone. The next step is performed by the anthrone oxygenase CPUR_05434 that catalyzes the oxidation of emodinanthrone to emodin. Emodin is further modified to yield monodictyphenone via several steps involving CPUR_05427, CPUR_05428, CPUR_05429 and CPUR_05430. The short chain dehydrogenase/reductase CPUR_05418 then catalyzes the C-5 ketoreduction to give the xanthone skeleton of the monomeric units. Ergochromes formation requires further dimerization steps of different xanthone units, probably catalyzed by the cytochrome P450 monooxygenase CPUR_05419. CPUR_05425, CPUR_05426 and CPUR_05431 are unique to Claviceps, thus it is likely that they are involved in further modification of xanthone units or in their dimerization. The yellow ergochromes and the red anthraquinone pigments endocrocin and clavorubin are products from the same PKS derived precursors and the latter are likely shunt products in the pathway of xanthone biosynthesis. It is proposed that atrochrysone carboxylic acid released from the PKS CPUR_05437 can also be converted to endocrocin anthrone which is further oxidized into endocrocin by CPUR_05435. Endocrocin could be then modified to clavorubin, possibly by CPUR_05423 and CPUR_05431. Clavorubin is the principal anthraquinone metabolite produced by the cluster with a much higher yield compared to endocrocin. The polypeptide is Monoogygenase CPUR_05431 (Claviceps purpurea (strain 20.1) (Ergot fungus)).